A 316-amino-acid chain; its full sequence is Epoxide hydrolase 2 (316 aa).

The AB hydrolase-1 domain maps to 25–302 (PAVLFLHGFP…AAHFINQERP (278 aa)). Catalysis depends on aspartate 101, which acts as the Nucleophile. Tyrosine 150 contacts an epoxide. The Proton donor role is filled by tyrosine 230. Residue histidine 295 is the Proton acceptor of the active site.

The protein belongs to the AB hydrolase superfamily. Epoxide hydrolase family. In terms of assembly, homodimer. As to expression, highly expressed in young fruits 15 days after anthesis (15-DAA). Also observed in stems and leaves.

The catalysed reaction is an epoxide + H2O = an ethanediol. It carries out the reaction (24S)-24,25-epoxycucurbitadienol + H2O = (24R)-24,25-dihydroxycucurbitadienol. Its pathway is secondary metabolite biosynthesis; terpenoid biosynthesis. In terms of biological role, epoxide hydrolase involved in the biosynthesis of cucurbitacin and mogroside tetracyclic triterpene natural products (e.g. siamenoside I and mogrosides IV, V and VI). Cucurbitacins have cytotoxic properties and exhibit deterrent taste as a defense barrier against herbivores. Mogrosides are nonsugar highly oxygenated compounds used as high-intensity zero-calorie sweeteners; they also possess pharmacological properties such as regulating immunity, lowering blood sugar and lipid levels, protecting the liver, and acting as antioxidants and antitumor agents. Catalyzes the hydrolysis of aromatic epoxide-containing substrates, such as the conversion of 24,25-epoxycucurbitadienol to 24,25-dihydroxycucurbitadienol. The polypeptide is Epoxide hydrolase 2 (Siraitia grosvenorii (Monk's fruit)).